The chain runs to 1056 residues: MKADSSSSSSMSSRMRLRNSHGVGSSSQDWSPFSRHRYSALSSQEDYRSEESEEFGPVFIQEPDDAIFSLDSDDKKIIMNCEARGNPVPTYSWLINGTNVDTEADFRYSLIDGNLIIHNASEVIDYGRYQCRAENSIGIVLSRDALLQFAYLGPFSGKTRGAVSVREGQGVVLMCAPPSHSPEIIYSWVFNELPSFVAEDSRRFISQETGNLYIPKVQPSDVGSYVCQVKNTVTNARVLSPPTPLTLKTDGVMGEYEPKIEAHFPQTVLAAKGVTVRLECFALGNPVPTITWRKMSGNIPKKARLRKSQAVLEIPNIQLEDSGSYECKAENTRGGTAFRGHLQVYTLPQWISMINDTQLDSGEQLRWECRATGKPRPTYRWLRNGEPLSTQSRVEMVNGELTIHRLQQADSGMYQCIAENKYGAIYSSAELKILASAPMFNNNPVRLIATVGKDVSLECRPRASPKPRISWRKNDRRLQPSRRIMLLRNNTLRIINSSRSDEGSYVCRAENQFGSAELTTVLLVKEPMRVELSPLRVEVTVGESVVLSCKVTHDPSLDVSFLWLLNNQPLNTQQDGGHFEYIQTQSSTADLMIRSILLKHAGKYGCRAQTSTDSVLAEAELLVRGPPGPPGVVIVEEITASTATLSWSHGVDNHSPITTYNVQARSPVSLGWQTVKTDPDPVTGSMESAMAVDLNPWVEYEFRVVATNSIGTGDPSPPSRAVRTKEAVPSVAPANVRGGNGRRHELVISWEPVSEEYQNGEGFGYIVAFRVNGTRGWKEKMVTSADSTTYKYRDETFPPLTPFEVRVGVYNNKGDGPFSEVVTVFSAEGEPREPPSEVQAFAVSSSEIKVLWKPPSPGLGRPQGYEVSFWKDVEQEELGKKKRTLGNETNMLLSGLDGNTQYLVSVKGFNSAGQGPSSTAVKISTKKNAPSLPPGNLMWIQEGNNVSLSWDPVKARDNESEVIGYKVLLRQEGRGHSQVMRTPNSAVVLTLPEGGTYIIEVRAVSEGGEGAASAQVRVLTSSGVRAKNGQLSVQNSPPGLAWTALFLSLMVPSFPL.

Over residues 1-14 (MKADSSSSSSMSSR) the composition is skewed to low complexity. Residues 1-33 (MKADSSSSSSMSSRMRLRNSHGVGSSSQDWSPF) form a disordered region. A compositionally biased stretch (polar residues) spans 22-31 (GVGSSSQDWS). Ig-like C2-type domains follow at residues 57–142 (PVFI…IVLS), 154–240 (PFSG…RVLS), 258–343 (PKIE…GHLQ), 348–432 (PQWI…AELK), 438–519 (PMFN…AELT), and 527–622 (PMRV…AELL). Cystine bridges form between Cys-81–Cys-131, Cys-175–Cys-227, and Cys-280–Cys-327. Asn-96 and Asn-119 each carry an N-linked (GlcNAc...) asparagine glycan. Asn-355 carries N-linked (GlcNAc...) asparagine glycosylation. 3 disulfides stabilise this stretch: Cys-369-Cys-416, Cys-459-Cys-507, and Cys-549-Cys-606. Residues Asn-489 and Asn-496 are each glycosylated (N-linked (GlcNAc...) asparagine). 4 Fibronectin type-III domains span residues 629-727 (PPGV…TKEA), 732-829 (APAN…SAEG), 834-928 (PPSE…TKKN), and 933-1023 (PPGN…TSSG). A disordered region spans residues 711–736 (GTGDPSPPSRAVRTKEAVPSVAPANV). Asn-772, Asn-887, Asn-945, and Asn-958 each carry an N-linked (GlcNAc...) asparagine glycan. Asn-1035 carries the GPI-anchor amidated asparagine lipid modification. The propeptide at 1036 to 1056 (SPPGLAWTALFLSLMVPSFPL) is removed in mature form.

Belongs to the immunoglobulin superfamily. Contactin family.

It is found in the cell membrane. Its function is as follows. Contactins mediate cell surface interactions during nervous system development. This Danio rerio (Zebrafish) protein is Contactin-5 (cntn5).